A 95-amino-acid chain; its full sequence is Large ribosomal subunit protein uL23 (95 aa).

The protein belongs to the universal ribosomal protein uL23 family. Part of the 50S ribosomal subunit. Contacts protein L29, and trigger factor when it is bound to the ribosome.

In terms of biological role, one of the early assembly proteins it binds 23S rRNA. One of the proteins that surrounds the polypeptide exit tunnel on the outside of the ribosome. Forms the main docking site for trigger factor binding to the ribosome. The protein is Large ribosomal subunit protein uL23 of Shouchella clausii (strain KSM-K16) (Alkalihalobacillus clausii).